The sequence spans 558 residues: 2-isopropylmalate synthase (558 aa).

Residues 28 to 304 (PIWCSVDLRD…DPELEFSNLN (277 aa)) enclose the Pyruvate carboxyltransferase domain. Residues aspartate 37, histidine 243, histidine 245, and asparagine 279 each contribute to the Mg(2+) site. The segment at 438-558 (NRSPYYLKNY…VSALNRSKLK (121 aa)) is regulatory domain.

This sequence belongs to the alpha-IPM synthase/homocitrate synthase family. LeuA type 2 subfamily. Homodimer. The cofactor is Mg(2+).

It localises to the cytoplasm. The catalysed reaction is 3-methyl-2-oxobutanoate + acetyl-CoA + H2O = (2S)-2-isopropylmalate + CoA + H(+). It functions in the pathway amino-acid biosynthesis; L-leucine biosynthesis; L-leucine from 3-methyl-2-oxobutanoate: step 1/4. Its function is as follows. Catalyzes the condensation of the acetyl group of acetyl-CoA with 3-methyl-2-oxobutanoate (2-ketoisovalerate) to form 3-carboxy-3-hydroxy-4-methylpentanoate (2-isopropylmalate). In Clostridium acetobutylicum (strain ATCC 824 / DSM 792 / JCM 1419 / IAM 19013 / LMG 5710 / NBRC 13948 / NRRL B-527 / VKM B-1787 / 2291 / W), this protein is 2-isopropylmalate synthase.